Reading from the N-terminus, the 1176-residue chain is Pesticidal crystal protein Cry1Aa (1176 aa).

The protein belongs to the delta endotoxin family.

Its function is as follows. Promotes colloidosmotic lysis by binding to the midgut epithelial cells of many lepidopteran larvae. The sequence is that of Pesticidal crystal protein Cry1Aa (cry1Aa) from Bacillus thuringiensis subsp. aizawai.